We begin with the raw amino-acid sequence, 119 residues long: Fluoride-specific ion channel FluC (119 aa).

4 helical membrane passes run 5–25 (IIPLSIGAALGATARWLLNLA), 30–50 (LSPATGNLFANWTGAFLIGIF), 59–79 (WKLLLITGFLGSLTTLSGFSL), and 92–112 (SALANIFLHTAGSLLLTWLGL). 2 residues coordinate Na(+): G69 and T72.

This sequence belongs to the fluoride channel Fluc/FEX (TC 1.A.43) family.

It localises to the cell inner membrane. The catalysed reaction is fluoride(in) = fluoride(out). Na(+) is not transported, but it plays an essential structural role and its presence is essential for fluoride channel function. In terms of biological role, fluoride-specific ion channel. Important for reducing fluoride concentration in the cell, thus reducing its toxicity. This Neisseria meningitidis serogroup A / serotype 4A (strain DSM 15465 / Z2491) protein is Fluoride-specific ion channel FluC.